The primary structure comprises 601 residues: Elongation factor 4 (601 aa).

The 184-residue stretch at 5–188 folds into the tr-type G domain; it reads SHIRNFAIIA…ALVLRLPPPT (184 aa). GTP contacts are provided by residues 17 to 22 and 135 to 138; these read DHGKST and NKID.

Belongs to the TRAFAC class translation factor GTPase superfamily. Classic translation factor GTPase family. LepA subfamily.

It localises to the cell inner membrane. The catalysed reaction is GTP + H2O = GDP + phosphate + H(+). In terms of biological role, required for accurate and efficient protein synthesis under certain stress conditions. May act as a fidelity factor of the translation reaction, by catalyzing a one-codon backward translocation of tRNAs on improperly translocated ribosomes. Back-translocation proceeds from a post-translocation (POST) complex to a pre-translocation (PRE) complex, thus giving elongation factor G a second chance to translocate the tRNAs correctly. Binds to ribosomes in a GTP-dependent manner. This is Elongation factor 4 from Rhodospirillum rubrum (strain ATCC 11170 / ATH 1.1.1 / DSM 467 / LMG 4362 / NCIMB 8255 / S1).